Here is a 235-residue protein sequence, read N- to C-terminus: Probable membrane-associated kinase regulator 6 (235 aa).

The interval 108–140 (SAATEEESEPLDTTTSEKIDTRGLNSKPSPTSS) is disordered. The segment covering 130–140 (GLNSKPSPTSS) has biased composition (polar residues).

It is found in the cell membrane. In terms of biological role, may be involved in abscisic acid signaling by acting as a kinase regulator. This is Probable membrane-associated kinase regulator 6 (MAKR6) from Arabidopsis thaliana (Mouse-ear cress).